Consider the following 381-residue polypeptide: 8-amino-7-oxononanoate synthase (381 aa).

R27 serves as a coordination point for substrate. 105 to 106 (GY) serves as a coordination point for pyridoxal 5'-phosphate. Position 130 (H130) interacts with substrate. Pyridoxal 5'-phosphate-binding positions include S176, 201 to 204 (DEAH), and 232 to 235 (TLSK). Position 235 is an N6-(pyridoxal phosphate)lysine (K235). Residue T345 coordinates substrate.

This sequence belongs to the class-II pyridoxal-phosphate-dependent aminotransferase family. BioF subfamily. Homodimer. The cofactor is pyridoxal 5'-phosphate.

The catalysed reaction is 6-carboxyhexanoyl-[ACP] + L-alanine + H(+) = (8S)-8-amino-7-oxononanoate + holo-[ACP] + CO2. The protein operates within cofactor biosynthesis; biotin biosynthesis. Catalyzes the decarboxylative condensation of pimeloyl-[acyl-carrier protein] and L-alanine to produce 8-amino-7-oxononanoate (AON), [acyl-carrier protein], and carbon dioxide. This is 8-amino-7-oxononanoate synthase from Mycolicibacterium paratuberculosis (strain ATCC BAA-968 / K-10) (Mycobacterium paratuberculosis).